The following is a 135-amino-acid chain: MIVIAFDFGIKKIGVAVGENITKKGRPLSVLNAQNGCPNWQLVKNLIQYWQPQFIVVGLPLNINGTKQKITNKSEKFANLLKYKFNIVVKMHDERLTTVEAKSIIFKKNGFKGLKEEKIHSCAAVIILESWFNQY.

The protein belongs to the YqgF nuclease family.

The protein resides in the cytoplasm. In terms of biological role, could be a nuclease involved in processing of the 5'-end of pre-16S rRNA. The polypeptide is Putative pre-16S rRNA nuclease (Buchnera aphidicola subsp. Acyrthosiphon pisum (strain 5A)).